Here is a 428-residue protein sequence, read N- to C-terminus: MTSVVVVGTQWGDEGKGKITDFLSANAEVIARYQGGDNAGHTIVIDGKKFKLHLIPSGIFFPEKISVIGNGMVVNPKSLVKELSYLHEEGVTTDNLRISDRAHVILPYHIELDRLQEEAKGDNKIGTTIKGIGPAYMDKAARVGIRIADLLDKDIFRERLERNLAEKNRLFEKLYDSKAIVFDDIFEEYYEYGQQIKKYVIDTSVILNDALDNGKRVLFEGAQGVMLDIDQGTYPFVTSSNPVAGGVTIGSGVGPSKIDKVVGVCKAYTSRVGDGPFPTELFDEVGERIREVGHEYGTTTGRPRRVGWFDSVVMRHSRRVSGITNLSLNSIDVLSGLDTVKICVAYDLDGQRIDYYPASLEQLKRCKPIYEELPGWSEDITGVRNLEDLPENARNYVRRVSELVGVRISTFSVGPGREQTNILESVWS.

GTP contacts are provided by residues 12–18 (GDEGKGK) and 40–42 (GHT). Catalysis depends on Asp13, which acts as the Proton acceptor. Residues Asp13 and Gly40 each coordinate Mg(2+). IMP contacts are provided by residues 13–16 (DEGK), 38–41 (NAGH), Thr128, Arg142, Gln223, Thr238, and Arg302. His41 functions as the Proton donor in the catalytic mechanism. Substrate is bound at residue 298-304 (TTTGRPR). Residues Arg304, 330-332 (SID), and 412-414 (SVG) each bind GTP.

It belongs to the adenylosuccinate synthetase family. In terms of assembly, homodimer. Mg(2+) is required as a cofactor.

It localises to the cytoplasm. The catalysed reaction is IMP + L-aspartate + GTP = N(6)-(1,2-dicarboxyethyl)-AMP + GDP + phosphate + 2 H(+). It participates in purine metabolism; AMP biosynthesis via de novo pathway; AMP from IMP: step 1/2. Functionally, plays an important role in the de novo pathway of purine nucleotide biosynthesis. Catalyzes the first committed step in the biosynthesis of AMP from IMP. The polypeptide is Adenylosuccinate synthetase (Streptococcus pneumoniae serotype 2 (strain D39 / NCTC 7466)).